Reading from the N-terminus, the 129-residue chain is Small ribosomal subunit protein uS11 (129 aa).

It belongs to the universal ribosomal protein uS11 family. In terms of assembly, part of the 30S ribosomal subunit. Interacts with proteins S7 and S18. Binds to IF-3.

Located on the platform of the 30S subunit, it bridges several disparate RNA helices of the 16S rRNA. Forms part of the Shine-Dalgarno cleft in the 70S ribosome. This Lawsonia intracellularis (strain PHE/MN1-00) protein is Small ribosomal subunit protein uS11.